Here is a 159-residue protein sequence, read N- to C-terminus: Na(+)/H(+) antiporter subunit E1 (159 aa).

Helical transmembrane passes span 1-21 (MAVQLVLNFIIAVFWLFVTNS), 27-47 (FVLGFIFGLVLVYLLHRVLPG), 49-69 (FYVITLYRIIKLIIIFLIELI), and 101-121 (WQIVLLSNLITLTPGTVVLGV).

It belongs to the CPA3 antiporters (TC 2.A.63) subunit E family. In terms of assembly, may form a heterooligomeric complex that consists of seven subunits: mnhA1, mnhB1, mnhC1, mnhD1, mnhE1, mnhF1 and mnhG1.

Its subcellular location is the cell membrane. Mnh complex is a Na(+)/H(+) antiporter involved in Na(+) excretion. In Staphylococcus aureus (strain bovine RF122 / ET3-1), this protein is Na(+)/H(+) antiporter subunit E1 (mnhE1).